The following is a 313-amino-acid chain: MMLVELLSGVISCVCALLAVAFFTLLERKGLGYFQLRKGPNKVGLMGLPQPLADAVKLFTEELVKPTLVNVFPFLVCPAMSLFLALVLWILYNNYFVCSMGGLSMLLFLCVSSLGVYSVMGAGWFSNSKYALLGSVRAVAQSISYEVSMSLILMSCLLLVGSMSLSMIMKYQFFVWVAFVNFFMMLMWFVSCVAETHRAPFDFAEGESELVSGFNTEYGGVGFALLFMAEYGNILFMSVLVISLFFGGVVFVGVFGMGLCVMVSFVGWLFIWVRASYPRYRYDLLMYLIWKSYLPSVLSILMFLVVSVYILNG.

The next 8 helical transmembrane spans lie at 6–26 (LLSG…FTLL), 71–91 (VFPF…LWIL), 105–125 (MLLF…AGWF), 149–169 (MSLI…SMIM), 173–193 (FFVW…VSCV), 220–242 (GVGF…VLVI), 255–275 (FGMG…WVRA), and 293–313 (YLPS…ILNG).

It belongs to the complex I subunit 1 family.

The protein resides in the mitochondrion inner membrane. It carries out the reaction a ubiquinone + NADH + 5 H(+)(in) = a ubiquinol + NAD(+) + 4 H(+)(out). Functionally, core subunit of the mitochondrial membrane respiratory chain NADH dehydrogenase (Complex I) that is believed to belong to the minimal assembly required for catalysis. Complex I functions in the transfer of electrons from NADH to the respiratory chain. The immediate electron acceptor for the enzyme is believed to be ubiquinone. This chain is NADH-ubiquinone oxidoreductase chain 1 (ND1), found in Heterololigo bleekeri (Spear squid).